Reading from the N-terminus, the 356-residue chain is Calcium/calmodulin-dependent protein kinase type 1 (356 aa).

The Nuclear localization signal signature appears at 2-7 (PLFKRR). One can recognise a Protein kinase domain in the interval 22–278 (YDFRDVLGTG…CQSALEHPWI (257 aa)). Residues 28–36 (LGTGAFSKV) and lysine 52 contribute to the ATP site. The active-site Proton acceptor is aspartate 144. Threonine 179 is modified (phosphothreonine; by ckk-1). Positions 278 to 318 (ISGNTAYTHDIHRTVAVHLKKSLAKRNWKKAFNAAAAIRQL) are autoinhibitory domain. Residues 298–319 (KSLAKRNWKKAFNAAAAIRQLQ) form a calmodulin-binding region.

This sequence belongs to the protein kinase superfamily. CAMK Ser/Thr protein kinase family. CaMK subfamily. Requires Mg(2+) as cofactor.

It is found in the nucleus. It localises to the cytoplasm. The enzyme catalyses L-seryl-[protein] + ATP = O-phospho-L-seryl-[protein] + ADP + H(+). It catalyses the reaction L-threonyl-[protein] + ATP = O-phospho-L-threonyl-[protein] + ADP + H(+). With respect to regulation, activated by Ca(2+)/calmodulin. Binding of calmodulin results in a conformational change that generates functional binding sites for both substrate and ATP, and thus relieves autoinhibition and lowers the Km of substrate binding. Must be phosphorylated by ckk-1 to be maximally active but this does not appear to be required for activity in AFD neurons. Its function is as follows. Calcium/calmodulin-dependent protein kinase that operates in the calcium-triggered CaMKK-CaMK1 signaling cascade which results in transcriptional activation. Transcriptional activation occurs at least in part through phosphorylation of crh-1. Regulates gene expression, sensory morphology, and function of the AFD thermosensory neurons. Involved in long-term adaptation of AFD neurons to temperatures warmer than the initial acclimatized cultivation temperature. Acts in the FLP thermal nociceptors to moderate the responsiveness to noxious heat and controls neuropeptide release from FLP neurons in response to temperature elevations. Regulates the dauer decision, the decision of the larvae to enter into the alternative stress-resistant and long-lived dauer developmental stage, based on the feeding state, primarily in the AWC sensory neurons. Acts non cell-autonomously in the AWC neurons to regulate expression of the daf-28 insulin-like peptide and cell-autonomously in the ASI sensory neurons to regulate expression of the growth promoting daf-7 in a food-regulated manner. Plays a role in memory-based thermal response of an individual AFD neuron cell. Involved in chemotaxis response in AWC neurons to attractant 2-heptanone, a volatile organic compound emitted by the nematode pathogenic bacterium B.nematocida B16. Represses transcription of glutamate receptor glr-1 in the nucleus basally and in response to change in synaptic activity. The protein is Calcium/calmodulin-dependent protein kinase type 1 (cmk-1) of Caenorhabditis briggsae.